We begin with the raw amino-acid sequence, 236 residues long: V-set and transmembrane domain-containing protein 2A (236 aa).

The first 24 residues, 1 to 24 (MMGIFLVYVGFVFFSVLYVQQGLS), serve as a signal peptide directing secretion. The 117-residue stretch at 27–143 (AKFTEFPRNV…YGELQEHKAQ (117 aa)) folds into the Ig-like V-type domain. N35 is a glycosylation site (N-linked (GlcNAc...) asparagine). Residues C48 and C127 are joined by a disulfide bond. Residue N175 is glycosylated (N-linked (GlcNAc...) asparagine). Residues 184–199 (IHGSANQRTHSTSSPQ) are compositionally biased toward polar residues. The tract at residues 184 to 206 (IHGSANQRTHSTSSPQVVAKIPK) is disordered.

Homodimer. In terms of processing, N-glycosylated. N-linked glycosylation is critical for secretion but not for preadipocyte cell differentiation activity.

It is found in the secreted. In terms of biological role, plays a role in the regulation of the early stage of white and brown preadipocyte cell differentiation. Promotes adipogenic commitment of preadipocytes by increasing gene expression of the transcription factor PPARG in a BMP4-dependent signaling pathway. In Homo sapiens (Human), this protein is V-set and transmembrane domain-containing protein 2A.